The sequence spans 222 residues: Ribonuclease HII (222 aa).

Residues 17–206 (DLVAGVDEVG…VRAAHEARAS (190 aa)) enclose the RNase H type-2 domain. A divalent metal cation is bound by residues Asp-23, Glu-24, and Asp-115.

The protein belongs to the RNase HII family. Mn(2+) serves as cofactor. Mg(2+) is required as a cofactor.

It localises to the cytoplasm. The catalysed reaction is Endonucleolytic cleavage to 5'-phosphomonoester.. Functionally, endonuclease that specifically degrades the RNA of RNA-DNA hybrids. The polypeptide is Ribonuclease HII (Pseudomonas savastanoi pv. phaseolicola (strain 1448A / Race 6) (Pseudomonas syringae pv. phaseolicola (strain 1448A / Race 6))).